Here is a 935-residue protein sequence, read N- to C-terminus: Isoleucine--tRNA ligase (935 aa).

The 'HIGH' region signature appears at 58–68 (PYANGSIHVGH). Glutamate 558 lines the L-isoleucyl-5'-AMP pocket. Positions 599–603 (KMSKS) match the 'KMSKS' region motif. Lysine 602 is a binding site for ATP. Residues cysteine 897, cysteine 900, cysteine 917, and cysteine 920 each contribute to the Zn(2+) site.

This sequence belongs to the class-I aminoacyl-tRNA synthetase family. IleS type 1 subfamily. As to quaternary structure, monomer. Zn(2+) is required as a cofactor.

It is found in the cytoplasm. It catalyses the reaction tRNA(Ile) + L-isoleucine + ATP = L-isoleucyl-tRNA(Ile) + AMP + diphosphate. Its function is as follows. Catalyzes the attachment of isoleucine to tRNA(Ile). As IleRS can inadvertently accommodate and process structurally similar amino acids such as valine, to avoid such errors it has two additional distinct tRNA(Ile)-dependent editing activities. One activity is designated as 'pretransfer' editing and involves the hydrolysis of activated Val-AMP. The other activity is designated 'posttransfer' editing and involves deacylation of mischarged Val-tRNA(Ile). The protein is Isoleucine--tRNA ligase of Francisella tularensis subsp. holarctica (strain OSU18).